Consider the following 224-residue polypeptide: Probable amino-acid permease protein YxeN (224 aa).

The next 6 helical transmembrane spans lie at 3–23 (TIDW…LPIT), 24–44 (LFMA…LALI), 58–78 (LYIS…IYYG), 91–111 (ALTA…AEIF), 157–177 (FIGL…EMFA), and 190–210 (FETY…YSIL). The ABC transmembrane type-1 domain occupies 20-211 (LPITLFMAIA…VLTIIYSILQ (192 aa)).

This sequence belongs to the binding-protein-dependent transport system permease family. The complex is composed of two ATP-binding proteins (YxeO), two transmembrane proteins (YxeN) and a solute-binding protein (YxeM).

It localises to the cell membrane. Probably part of the ABC transporter complex YxeMNO that could be involved in amino-acid import. May transport S-methylcysteine. Probably responsible for the translocation of the substrate across the membrane. The protein is Probable amino-acid permease protein YxeN (yxeN) of Bacillus subtilis (strain 168).